A 502-amino-acid polypeptide reads, in one-letter code: Histidine--tRNA ligase (502 aa).

The protein belongs to the class-II aminoacyl-tRNA synthetase family. As to quaternary structure, homodimer.

Its subcellular location is the cytoplasm. The catalysed reaction is tRNA(His) + L-histidine + ATP = L-histidyl-tRNA(His) + AMP + diphosphate + H(+). This chain is Histidine--tRNA ligase, found in Brucella abortus (strain S19).